A 602-amino-acid polypeptide reads, in one-letter code: Elongation factor 4 (602 aa).

A tr-type G domain is found at 6–188 (DHIRNFSIVA…AIVNKLPAPK (183 aa)). GTP contacts are provided by residues 18 to 23 (DHGKST) and 135 to 138 (NKID).

This sequence belongs to the TRAFAC class translation factor GTPase superfamily. Classic translation factor GTPase family. LepA subfamily.

It localises to the cell inner membrane. The catalysed reaction is GTP + H2O = GDP + phosphate + H(+). Required for accurate and efficient protein synthesis under certain stress conditions. May act as a fidelity factor of the translation reaction, by catalyzing a one-codon backward translocation of tRNAs on improperly translocated ribosomes. Back-translocation proceeds from a post-translocation (POST) complex to a pre-translocation (PRE) complex, thus giving elongation factor G a second chance to translocate the tRNAs correctly. Binds to ribosomes in a GTP-dependent manner. The polypeptide is Elongation factor 4 (Brucella melitensis biotype 2 (strain ATCC 23457)).